The sequence spans 190 residues: Zinc finger C2H2 protein ECU03_0790 (190 aa).

4 consecutive C2H2-type zinc fingers follow at residues Arg-4–His-27, Tyr-33–His-55, Tyr-85–His-108, and His-119–His-142.

The sequence is that of Zinc finger C2H2 protein ECU03_0790 from Encephalitozoon cuniculi (strain GB-M1) (Microsporidian parasite).